The chain runs to 382 residues: RNA binding protein fox-1 homolog 1-like (382 aa).

2 disordered regions span residues 34-79 (QEAG…AAHP) and 94-148 (GPQH…QPKR). The span at 49–65 (YAPPPSYPPPGQAPPTP) shows a compositional bias: pro residues. The span at 101 to 110 (ESITASNTDD) shows a compositional bias: polar residues. In terms of domain architecture, RRM spans 147 to 223 (KRLHVSNIPF…RKIEVNNATA (77 aa)).

Expressed during muscle development in adaxial cells, somites, cardiac precursors, finbuds and jaw muscle cells.

The protein localises to the nucleus. RNA-binding protein that regulates alternative splicing events by binding to 5'-GCAUG-3' elements. Regulates alternative splicing of tissue-specific exons. In Danio rerio (Zebrafish), this protein is RNA binding protein fox-1 homolog 1-like (rbfox1l).